The chain runs to 28 residues: Alpha-(1-6)-linked fucose-specific lectin (28 aa).

Homohexamer. In terms of tissue distribution, expressed by mycelium-forming spores.

The protein localises to the secreted. In terms of biological role, alpha-(1-6)-linked L-fucose specific lectin. The sequence is that of Alpha-(1-6)-linked fucose-specific lectin from Rhizopus stolonifer (Rhizopus nigricans).